The chain runs to 273 residues: Putative pyruvate, phosphate dikinase regulatory protein (273 aa).

153 to 160 lines the ADP pocket; the sequence is GVSRTSKS.

The protein belongs to the pyruvate, phosphate/water dikinase regulatory protein family. PDRP subfamily.

It carries out the reaction N(tele)-phospho-L-histidyl/L-threonyl-[pyruvate, phosphate dikinase] + ADP = N(tele)-phospho-L-histidyl/O-phospho-L-threonyl-[pyruvate, phosphate dikinase] + AMP + H(+). The enzyme catalyses N(tele)-phospho-L-histidyl/O-phospho-L-threonyl-[pyruvate, phosphate dikinase] + phosphate + H(+) = N(tele)-phospho-L-histidyl/L-threonyl-[pyruvate, phosphate dikinase] + diphosphate. Bifunctional serine/threonine kinase and phosphorylase involved in the regulation of the pyruvate, phosphate dikinase (PPDK) by catalyzing its phosphorylation/dephosphorylation. The polypeptide is Putative pyruvate, phosphate dikinase regulatory protein (Ehrlichia chaffeensis (strain ATCC CRL-10679 / Arkansas)).